Here is a 161-residue protein sequence, read N- to C-terminus: Nucleotide-binding protein PSEEN4469 (161 aa).

It belongs to the YajQ family.

Functionally, nucleotide-binding protein. The protein is Nucleotide-binding protein PSEEN4469 of Pseudomonas entomophila (strain L48).